Reading from the N-terminus, the 221-residue chain is Deoxyribose-phosphate aldolase (221 aa).

Aspartate 89 acts as the Proton donor/acceptor in catalysis. Lysine 151 functions as the Schiff-base intermediate with acetaldehyde in the catalytic mechanism. Lysine 180 functions as the Proton donor/acceptor in the catalytic mechanism.

It belongs to the DeoC/FbaB aldolase family. DeoC type 1 subfamily.

Its subcellular location is the cytoplasm. The enzyme catalyses 2-deoxy-D-ribose 5-phosphate = D-glyceraldehyde 3-phosphate + acetaldehyde. It functions in the pathway carbohydrate degradation; 2-deoxy-D-ribose 1-phosphate degradation; D-glyceraldehyde 3-phosphate and acetaldehyde from 2-deoxy-alpha-D-ribose 1-phosphate: step 2/2. In terms of biological role, catalyzes a reversible aldol reaction between acetaldehyde and D-glyceraldehyde 3-phosphate to generate 2-deoxy-D-ribose 5-phosphate. This chain is Deoxyribose-phosphate aldolase, found in Mesomycoplasma hyopneumoniae (strain 232) (Mycoplasma hyopneumoniae).